The primary structure comprises 382 residues: Intermediate transcription factor 3 large subunit (382 aa).

Belongs to the orthopoxvirus OPG150 family. Heterodimerizes with protein A8 to form the virus intermediate transcription factor (VITF)-3.

In terms of biological role, acts with RNA polymerase to initiate transcription from intermediate gene promoters. This Bos taurus (Bovine) protein is Intermediate transcription factor 3 large subunit (OPG150).